The primary structure comprises 54 residues: Ferredoxin (54 aa).

4Fe-4S ferredoxin-type domains follow at residues 2–28 (HVISDECVKCGACASTCPTGAIEEGET) and 29–54 (KYVVTDSCIDCGACEAVCPTGAISAE). Positions 8, 11, 14, 18, 36, 39, 42, and 46 each coordinate [4Fe-4S] cluster.

Requires [4Fe-4S] cluster as cofactor.

Functionally, ferredoxins are iron-sulfur proteins that transfer electrons in a wide variety of metabolic reactions. The protein is Ferredoxin of Megasphaera elsdenii.